A 367-amino-acid chain; its full sequence is Ferrochelatase (367 aa).

2 residues coordinate Fe cation: H213 and E294.

This sequence belongs to the ferrochelatase family.

It localises to the cytoplasm. The enzyme catalyses heme b + 2 H(+) = protoporphyrin IX + Fe(2+). It participates in porphyrin-containing compound metabolism; protoheme biosynthesis; protoheme from protoporphyrin-IX: step 1/1. Its function is as follows. Catalyzes the ferrous insertion into protoporphyrin IX. This chain is Ferrochelatase, found in Polaromonas sp. (strain JS666 / ATCC BAA-500).